The primary structure comprises 642 residues: MGKTIGIDLGTTNSCVAVLDGGKARVIENGEGDRTTPSVVAFTDDGEILVGSPAKRQAVTNPNKTLFAIKRLIGRRFQDEEVQRDIGIMPYKIVKADNGDAWVEIDGDKKAPPQISAEVLKKMKKTAEEFLGEKVTDAVITVPAYFNDAQRQATKDAGKIAGLNVKRIINEPTAAALAYGMDKKSGDNVIAVYDLGGGTFDISIIEIDEVEGEHTFEVLATNGDTHLGGEDFDNRLINYLVEQFQKDQGMDLRKDPLAMQRLKEAAEKAKIELSSAQQTEVNLPYITADNAGPKHMAIKVTRAKLESLVEDLIKKSLEPLKQALADADLSVSDIQDIIMVGGQTRMPKVQAAVTDFFGKEPRRDVNPDEAVAVGAAVQAGVLQGDVKDVLLLDVCPLSLGIETMGGVMTKLIEKNTTIPTKESQTFSTAEDNQSAVTIHVIQGERKRAGDNKSLGQFNLEGIRAAARGVPQIEVTFDIDADGILHVSAKDKDTGKEQKITIKASSGLDESEVDKMVKDAEAHAEEDKKFEEMVQARNQADGLVHATRNQLKEVGDALSQEDKDAIEKACEELEQASKDGDKEAIDAKSQALMEASQKLMEAAQQQQAQQGAEGAAGGEQQSSKADDDVVDAEFEEVKDDDKK.

The residue at position 199 (Thr-199) is a Phosphothreonine; by autocatalysis. Residues 570-585 (EELEQASKDGDKEAID) show a composition bias toward basic and acidic residues. Positions 570-642 (EELEQASKDG…FEEVKDDDKK (73 aa)) are disordered. A compositionally biased stretch (low complexity) spans 600 to 620 (EAAQQQQAQQGAEGAAGGEQQ). Over residues 627–642 (DVVDAEFEEVKDDDKK) the composition is skewed to acidic residues.

This sequence belongs to the heat shock protein 70 family.

Acts as a chaperone. This chain is Chaperone protein DnaK, found in Idiomarina loihiensis (strain ATCC BAA-735 / DSM 15497 / L2-TR).